The sequence spans 216 residues: UPF0548 protein (216 aa).

This sequence belongs to the UPF0548 family.

This chain is UPF0548 protein, found in Dictyostelium discoideum (Social amoeba).